The sequence spans 89 residues: MGCMKSKRRDPTQNSDSSEKVDGKPGKHGEKAVLVFSEIGSMEDSVRINPVLLDYAQRLSEEIVARAVQQWAEVDSRYSDIPYIECDVP.

A disordered region spans residues 1–29; it reads MGCMKSKRRDPTQNSDSSEKVDGKPGKHG. G2 carries N-myristoyl glycine lipidation. Residues 17 to 29 show a composition bias toward basic and acidic residues; sequence SSEKVDGKPGKHG.

The protein belongs to the small membrane AKAP family. In terms of processing, may be palmitoylated at Cys-3.

It localises to the cell membrane. Binds to type I regulatory subunits of protein kinase A and may anchor/target them to the plasma membrane. This chain is Small membrane A-kinase anchor protein, found in Danio rerio (Zebrafish).